A 296-amino-acid polypeptide reads, in one-letter code: Methylsterol monooxygenase 1 (296 aa).

A run of 2 helical transmembrane segments spans residues 55–75 (LLVHEASYFLLCVPGFIFQFI) and 100–120 (TLIFNHFFIQLPLICGTYYFT). Residues 145–274 (CAVIEDAWHY…FTWWDRIFGT (130 aa)) form the Fatty acid hydroxylase domain. Residues 157–161 (HRLLH) carry the Histidine box-1 motif. The Histidine box-2 signature appears at 170-174 (HKVHH). A helical membrane pass occupies residues 199–219 (FFIGIVVFCNHVVLLWAWVIC). The Histidine box-3 motif lies at 249 to 255 (FHDFHHM).

The protein belongs to the sterol desaturase family. Fe cation serves as cofactor.

Its subcellular location is the endoplasmic reticulum membrane. It catalyses the reaction 4,4-dimethyl-5alpha-cholest-7-en-3beta-ol + 6 Fe(II)-[cytochrome b5] + 3 O2 + 5 H(+) = 4alpha-carboxy-4beta-methyl-5alpha-cholest-7-ene-3beta-ol + 6 Fe(III)-[cytochrome b5] + 4 H2O. The protein operates within steroid biosynthesis; zymosterol biosynthesis; zymosterol from lanosterol: step 3/6. Catalyzes the first step in the removal of the two C-4 methyl groups of 4,4-dimethylzymosterol. This Gallus gallus (Chicken) protein is Methylsterol monooxygenase 1 (MSMO1).